The primary structure comprises 560 residues: Arginine--tRNA ligase (560 aa).

A 'HIGH' region motif is present at residues 122–132 (ANPNGPLHVGH).

It belongs to the class-I aminoacyl-tRNA synthetase family.

The protein resides in the cytoplasm. The catalysed reaction is tRNA(Arg) + L-arginine + ATP = L-arginyl-tRNA(Arg) + AMP + diphosphate. The sequence is that of Arginine--tRNA ligase from Methanosphaera stadtmanae (strain ATCC 43021 / DSM 3091 / JCM 11832 / MCB-3).